Here is a 132-residue protein sequence, read N- to C-terminus: Probable histone H2A.2 (132 aa).

It belongs to the histone H2A family. In terms of assembly, the nucleosome is a histone octamer containing two molecules each of H2A, H2B, H3 and H4 assembled in one H3-H4 heterotetramer and two H2A-H2B heterodimers. The octamer wraps approximately 147 bp of DNA. Not ubiquitinated. In terms of tissue distribution, expressed mainly in non-dividing tissues of the plant. Also found in meristems and dividing cells.

It is found in the nucleus. The protein resides in the chromosome. Its function is as follows. Core component of nucleosome. Nucleosomes wrap and compact DNA into chromatin, limiting DNA accessibility to the cellular machineries which require DNA as a template. Histones thereby play a central role in transcription regulation, DNA repair, DNA replication and chromosomal stability. DNA accessibility is regulated via a complex set of post-translational modifications of histones, also called histone code, and nucleosome remodeling. This chain is Probable histone H2A.2, found in Arabidopsis thaliana (Mouse-ear cress).